Reading from the N-terminus, the 188-residue chain is Elongation factor P (188 aa).

Residue Lys-34 is modified to N6-(3,6-diaminohexanoyl)-5-hydroxylysine.

Belongs to the elongation factor P family. May be beta-lysylated on the epsilon-amino group of Lys-34 by the combined action of EpmA and EpmB, and then hydroxylated on the C5 position of the same residue by EpmC (if this protein is present). Lysylation is critical for the stimulatory effect of EF-P on peptide-bond formation. The lysylation moiety may extend toward the peptidyltransferase center and stabilize the terminal 3-CCA end of the tRNA. Hydroxylation of the C5 position on Lys-34 may allow additional potential stabilizing hydrogen-bond interactions with the P-tRNA.

It is found in the cytoplasm. The protein operates within protein biosynthesis; polypeptide chain elongation. Involved in peptide bond synthesis. Alleviates ribosome stalling that occurs when 3 or more consecutive Pro residues or the sequence PPG is present in a protein, possibly by augmenting the peptidyl transferase activity of the ribosome. Modification of Lys-34 is required for alleviation. This Histophilus somni (strain 129Pt) (Haemophilus somnus) protein is Elongation factor P.